We begin with the raw amino-acid sequence, 281 residues long: sn-glycerol-3-phosphate transport system permease protein UgpE (281 aa).

A run of 6 helical transmembrane segments spans residues 16–36 (LILG…AATL), 85–105 (FSIT…IVWF), 113–133 (FFWM…FPTV), 142–162 (LDSY…TFLF), 202–222 (ALFV…LLII), and 247–267 (WNQV…IVLA). The ABC transmembrane type-1 domain occupies 77–268 (MLNSFIMAFS…IPPVVIVLAM (192 aa)).

Belongs to the binding-protein-dependent transport system permease family. UgpAE subfamily. In terms of assembly, the complex is composed of two ATP-binding proteins (UgpC), two transmembrane proteins (UgpA and UgpE) and a solute-binding protein (UgpB).

It is found in the cell inner membrane. Functionally, part of the ABC transporter complex UgpBAEC involved in sn-glycerol-3-phosphate (G3P) import. Probably responsible for the translocation of the substrate across the membrane. The sequence is that of sn-glycerol-3-phosphate transport system permease protein UgpE (ugpE) from Salmonella choleraesuis (strain SC-B67).